The primary structure comprises 539 residues: O-phosphoserine--tRNA(Cys) ligase (539 aa).

Substrate is bound by residues 188 to 190, 233 to 235, 275 to 276, and N327; these read HMT, SAS, and YY.

The protein belongs to the class-II aminoacyl-tRNA synthetase family. O-phosphoseryl-tRNA(Cys) synthetase subfamily. Homotetramer. Interacts with SepCysS.

It carries out the reaction tRNA(Cys) + O-phospho-L-serine + ATP = O-phospho-L-seryl-tRNA(Cys) + AMP + diphosphate. Its function is as follows. Catalyzes the attachment of O-phosphoserine (Sep) to tRNA(Cys). The protein is O-phosphoserine--tRNA(Cys) ligase of Methanosarcina acetivorans (strain ATCC 35395 / DSM 2834 / JCM 12185 / C2A).